Reading from the N-terminus, the 256-residue chain is Protein YIPF5 (256 aa).

Topologically, residues Met-1–Asp-125 are cytoplasmic. The chain crosses the membrane as a helical span at residues Leu-126–Ile-146. Gln-147 is a topological domain (lumenal). The chain crosses the membrane as a helical span at residues Phe-148–Leu-168. Residues Met-169–Thr-172 lie on the Cytoplasmic side of the membrane. Residues Gly-173–Leu-193 traverse the membrane as a helical segment. The Lumenal portion of the chain corresponds to Ser-194–Thr-195. A helical membrane pass occupies residues Phe-196–Gly-216. Topologically, residues Trp-217–Gln-235 are cytoplasmic. A helical membrane pass occupies residues Gln-236–Phe-256.

It belongs to the YIP1 family.

It is found in the endoplasmic reticulum membrane. The protein resides in the golgi apparatus. Its subcellular location is the cis-Golgi network membrane. Functionally, plays a role in transport between endoplasmic reticulum and Golgi. The polypeptide is Protein YIPF5 (yipf5) (Xenopus laevis (African clawed frog)).